We begin with the raw amino-acid sequence, 158 residues long: NAD(P)H-quinone oxidoreductase subunit J, chloroplastic (158 aa).

The protein belongs to the complex I 30 kDa subunit family. NDH is composed of at least 16 different subunits, 5 of which are encoded in the nucleus.

The protein resides in the plastid. It is found in the chloroplast thylakoid membrane. The enzyme catalyses a plastoquinone + NADH + (n+1) H(+)(in) = a plastoquinol + NAD(+) + n H(+)(out). The catalysed reaction is a plastoquinone + NADPH + (n+1) H(+)(in) = a plastoquinol + NADP(+) + n H(+)(out). NDH shuttles electrons from NAD(P)H:plastoquinone, via FMN and iron-sulfur (Fe-S) centers, to quinones in the photosynthetic chain and possibly in a chloroplast respiratory chain. The immediate electron acceptor for the enzyme in this species is believed to be plastoquinone. Couples the redox reaction to proton translocation, and thus conserves the redox energy in a proton gradient. In Lotus japonicus (Lotus corniculatus var. japonicus), this protein is NAD(P)H-quinone oxidoreductase subunit J, chloroplastic.